Reading from the N-terminus, the 146-residue chain is Prefoldin subunit alpha 1 (146 aa).

The protein belongs to the prefoldin subunit alpha family. As to quaternary structure, heterohexamer of two alpha and four beta subunits.

The protein localises to the cytoplasm. In terms of biological role, molecular chaperone capable of stabilizing a range of proteins. Seems to fulfill an ATP-independent, HSP70-like function in archaeal de novo protein folding. The protein is Prefoldin subunit alpha 1 of Thermococcus kodakarensis (strain ATCC BAA-918 / JCM 12380 / KOD1) (Pyrococcus kodakaraensis (strain KOD1)).